Reading from the N-terminus, the 375-residue chain is Fructose-1,6-bisphosphate aldolase/phosphatase (375 aa).

Asp-15 (proton acceptor; for FBP phosphatase activity) is an active-site residue. Asp-15, His-22, Asp-56, and Asp-57 together coordinate Mg(2+). Residue His-22 coordinates beta-D-fructose 1,6-bisphosphate. His-22 contacts dihydroxyacetone phosphate. Tyr-94 is a beta-D-fructose 1,6-bisphosphate binding site. Gln-98 provides a ligand contact to Mg(2+). Beta-D-fructose 1,6-bisphosphate is bound at residue 107 to 108 (GN). A Mg(2+)-binding site is contributed by Asp-135. Lys-136 is a beta-D-fructose 1,6-bisphosphate binding site. Lys-136 serves as a coordination point for dihydroxyacetone phosphate. Residue Tyr-237 is the Proton donor/acceptor; for FBP aldolase activity of the active site. Mg(2+)-binding residues include Lys-240, Asp-241, and Asp-242. Catalysis depends on Lys-240, which acts as the Schiff-base intermediate with DHAP; for FBP aldolase activity. Beta-D-fructose 1,6-bisphosphate is bound by residues 250–251 (QS), Arg-274, Asp-295, and Tyr-357. 2 residues coordinate dihydroxyacetone phosphate: Arg-274 and Asp-295.

Belongs to the FBP aldolase/phosphatase family. Homooctamer; dimer of tetramers. The cofactor is Mg(2+).

The catalysed reaction is beta-D-fructose 1,6-bisphosphate + H2O = beta-D-fructose 6-phosphate + phosphate. It catalyses the reaction beta-D-fructose 1,6-bisphosphate = D-glyceraldehyde 3-phosphate + dihydroxyacetone phosphate. It functions in the pathway carbohydrate biosynthesis; gluconeogenesis. Activity is enhanced by dithioerythritol, and is slightly inhibited by fructose 2,6-bisphosphate. AMP does not inhibit the enzyme activity. Functionally, catalyzes two subsequent steps in gluconeogenesis: the aldol condensation of dihydroxyacetone phosphate (DHAP) and glyceraldehyde-3-phosphate (GA3P) to fructose-1,6-bisphosphate (FBP), and the dephosphorylation of FBP to fructose-6-phosphate (F6P). Does not display hydrolase activity against fructose 2,6-bisphosphate, fructose 6-phosphate, fructose 1-phosphate, glucose 6-phosphate, and glucose 1-phosphate. Exhibits only negligible activity on inositol-1-phosphate (IMP). Is essential for the growth of T.kodakaraensis under gluconeogenic conditions. In Thermococcus kodakarensis (strain ATCC BAA-918 / JCM 12380 / KOD1) (Pyrococcus kodakaraensis (strain KOD1)), this protein is Fructose-1,6-bisphosphate aldolase/phosphatase.